Reading from the N-terminus, the 353-residue chain is Putative transcription factor MTF1 (353 aa).

Polar residues-rich tracts occupy residues 11-26 (VTRSNQQTAANTTSPA) and 36-58 (EPSNVSDLTSEPVESTQIKQQGN). Disordered stretches follow at residues 11–96 (VTRS…ALPC) and 129–174 (FTTT…TTNP). 2 stretches are compositionally biased toward low complexity: residues 59 to 95 (TEASQDIQQEQQQQQTHIHPQQPALSAQQTQQQPALP) and 133 to 145 (NSSPNPSSPSPSS). A compositionally biased stretch (basic residues) spans 148 to 164 (SHTRKNSKYTVRHHRTR). Polar residues predominate over residues 165–174 (QSSFNGTTNP).

The protein localises to the nucleus. May be involved in transcriptional activation. The sequence is that of Putative transcription factor MTF1 (MTF1) from Mucor circinelloides f. lusitanicus (Mucor racemosus var. lusitanicus).